Reading from the N-terminus, the 233-residue chain is Ribonuclease HII (233 aa).

Residues 21–211 (KIIAGVDEVG…LDALPQWRHL (191 aa)) form the RNase H type-2 domain. The a divalent metal cation site is built by D27, E28, and D119.

Belongs to the RNase HII family. The cofactor is Mn(2+). Mg(2+) is required as a cofactor.

It is found in the cytoplasm. It catalyses the reaction Endonucleolytic cleavage to 5'-phosphomonoester.. In terms of biological role, endonuclease that specifically degrades the RNA of RNA-DNA hybrids. In Streptomyces coelicolor (strain ATCC BAA-471 / A3(2) / M145), this protein is Ribonuclease HII (rnhB).